Here is a 218-residue protein sequence, read N- to C-terminus: Small ribosomal subunit protein uS3c (218 aa).

A KH type-2 domain is found at 47–120; it reads VRTHIKSSSN…KLHIAIEKVA (74 aa).

Belongs to the universal ribosomal protein uS3 family. As to quaternary structure, part of the 30S ribosomal subunit.

The protein localises to the plastid. It is found in the chloroplast. In Picea abies (Norway spruce), this protein is Small ribosomal subunit protein uS3c (rps3).